Reading from the N-terminus, the 930-residue chain is Translation initiation factor IF-2 (930 aa).

The segment at phenylalanine 31–glutamate 317 is disordered. A compositionally biased stretch (low complexity) spans proline 61–alanine 78. 2 stretches are compositionally biased toward pro residues: residues arginine 79 to alanine 99 and proline 108 to proline 120. Residues alanine 121–alanine 135 show a composition bias toward low complexity. Pro residues-rich tracts occupy residues arginine 136–arginine 158 and proline 178–glycine 192. A compositionally biased stretch (gly residues) spans proline 193–arginine 205. The span at asparagine 212–threonine 242 shows a compositional bias: pro residues. Over residues glycine 244–glycine 301 the composition is skewed to gly residues. Over residues lysine 305 to lysine 314 the composition is skewed to basic residues. The tr-type G domain maps to phenylalanine 426–aspartate 598. The tract at residues glycine 435–threonine 442 is G1. Glycine 435–threonine 442 lines the GTP pocket. Positions glycine 460 to histidine 464 are G2. Residues aspartate 485–glycine 488 are G3. GTP is bound by residues aspartate 485–histidine 489 and asparagine 539–aspartate 542. Positions asparagine 539 to aspartate 542 are G4. The tract at residues serine 575–lysine 577 is G5.

The protein belongs to the TRAFAC class translation factor GTPase superfamily. Classic translation factor GTPase family. IF-2 subfamily.

The protein localises to the cytoplasm. In terms of biological role, one of the essential components for the initiation of protein synthesis. Protects formylmethionyl-tRNA from spontaneous hydrolysis and promotes its binding to the 30S ribosomal subunits. Also involved in the hydrolysis of GTP during the formation of the 70S ribosomal complex. The protein is Translation initiation factor IF-2 of Mycolicibacterium gilvum (strain PYR-GCK) (Mycobacterium gilvum (strain PYR-GCK)).